A 411-amino-acid polypeptide reads, in one-letter code: Arginine deiminase (411 aa).

Cys401 acts as the Amidino-cysteine intermediate in catalysis.

It belongs to the arginine deiminase family.

It localises to the cytoplasm. The catalysed reaction is L-arginine + H2O = L-citrulline + NH4(+). It participates in amino-acid degradation; L-arginine degradation via ADI pathway; carbamoyl phosphate from L-arginine: step 1/2. The sequence is that of Arginine deiminase from Streptococcus pyogenes serotype M49 (strain NZ131).